The primary structure comprises 308 residues: Lipoyl synthase (308 aa).

Cysteine 51, cysteine 56, cysteine 62, cysteine 77, cysteine 81, cysteine 84, and serine 290 together coordinate [4Fe-4S] cluster. One can recognise a Radical SAM core domain in the interval 63–279; it reads WSKRHATFMI…ETIAKSKGFL (217 aa).

It belongs to the radical SAM superfamily. Lipoyl synthase family. Requires [4Fe-4S] cluster as cofactor.

The protein resides in the cytoplasm. The enzyme catalyses [[Fe-S] cluster scaffold protein carrying a second [4Fe-4S](2+) cluster] + N(6)-octanoyl-L-lysyl-[protein] + 2 oxidized [2Fe-2S]-[ferredoxin] + 2 S-adenosyl-L-methionine + 4 H(+) = [[Fe-S] cluster scaffold protein] + N(6)-[(R)-dihydrolipoyl]-L-lysyl-[protein] + 4 Fe(3+) + 2 hydrogen sulfide + 2 5'-deoxyadenosine + 2 L-methionine + 2 reduced [2Fe-2S]-[ferredoxin]. It participates in protein modification; protein lipoylation via endogenous pathway; protein N(6)-(lipoyl)lysine from octanoyl-[acyl-carrier-protein]: step 2/2. Functionally, catalyzes the radical-mediated insertion of two sulfur atoms into the C-6 and C-8 positions of the octanoyl moiety bound to the lipoyl domains of lipoate-dependent enzymes, thereby converting the octanoylated domains into lipoylated derivatives. In Pelagibacter ubique (strain HTCC1062), this protein is Lipoyl synthase.